The following is a 437-amino-acid chain: Leucine-rich repeat flightless-interacting protein 2 (437 aa).

S18 is modified (phosphoserine). Residues 22 to 49 (EALSNIAREAEARLAAKRAARAEARDIR) adopt a coiled-coil conformation. Basic and acidic residues predominate over residues 33–62 (ARLAAKRAARAEARDIRMRELERQQRESSS). Positions 33-152 (ARLAAKRAAR…DTSLSELRES (120 aa)) are disordered. The span at 63-74 (KDITGTHWSRAS) shows a compositional bias: polar residues. Residues 77 to 105 (KRRDMMYDSIKDRSSRVSSLLDEKSDKQY) are compositionally biased toward basic and acidic residues. Residues 110–139 (TRPSSRNSASATTPLSGNSSRRGSGDTSSL) show a composition bias toward polar residues. Residues S114, S117, S125, S129, and S133 each carry the phosphoserine modification. T136 is modified (phosphothreonine). 2 positions are modified to phosphoserine: S137 and S138. Coiled coils occupy residues 143–239 (DTSL…LIEK) and 282–430 (LDVR…KANR).

The protein belongs to the LRRFIP family. Interacts with DVL3 and FLII. Weakly interacts with MYD88 in resting cells. Following LPS-stimulation, the interaction with MYD88 is rapidly enhanced; the complex gradually dissociates to basal levels after 6 hours of stimulation. Interaction with MYD88 is regulated by LPS-induced phosphorylation. In the presence of LPS, competes with FLII for MYD88-binding.

Its function is as follows. May function as activator of the canonical Wnt signaling pathway, in association with DVL3, upstream of CTNNB1/beta-catenin. Positively regulates Toll-like receptor (TLR) signaling in response to agonist probably by competing with the negative FLII regulator for MYD88-binding. The sequence is that of Leucine-rich repeat flightless-interacting protein 2 (Lrrfip2) from Rattus norvegicus (Rat).